Here is a 235-residue protein sequence, read N- to C-terminus: Leucyl/phenylalanyl-tRNA--protein transferase (235 aa).

The protein belongs to the L/F-transferase family.

It localises to the cytoplasm. It catalyses the reaction N-terminal L-lysyl-[protein] + L-leucyl-tRNA(Leu) = N-terminal L-leucyl-L-lysyl-[protein] + tRNA(Leu) + H(+). The catalysed reaction is N-terminal L-arginyl-[protein] + L-leucyl-tRNA(Leu) = N-terminal L-leucyl-L-arginyl-[protein] + tRNA(Leu) + H(+). The enzyme catalyses L-phenylalanyl-tRNA(Phe) + an N-terminal L-alpha-aminoacyl-[protein] = an N-terminal L-phenylalanyl-L-alpha-aminoacyl-[protein] + tRNA(Phe). Its function is as follows. Functions in the N-end rule pathway of protein degradation where it conjugates Leu, Phe and, less efficiently, Met from aminoacyl-tRNAs to the N-termini of proteins containing an N-terminal arginine or lysine. The sequence is that of Leucyl/phenylalanyl-tRNA--protein transferase from Shewanella frigidimarina (strain NCIMB 400).